We begin with the raw amino-acid sequence, 107 residues long: Integration host factor subunit beta (107 aa).

Residues 76–107 (FVPHFKPGKELRERVDGRAGEPLKADDPDDER) form a disordered region. The span at 82–101 (PGKELRERVDGRAGEPLKAD) shows a compositional bias: basic and acidic residues.

Belongs to the bacterial histone-like protein family. Heterodimer of an alpha and a beta chain.

This protein is one of the two subunits of integration host factor, a specific DNA-binding protein that functions in genetic recombination as well as in transcriptional and translational control. The sequence is that of Integration host factor subunit beta from Burkholderia cenocepacia (strain ATCC BAA-245 / DSM 16553 / LMG 16656 / NCTC 13227 / J2315 / CF5610) (Burkholderia cepacia (strain J2315)).